The sequence spans 207 residues: dTTP/UTP pyrophosphatase (207 aa).

Aspartate 79 functions as the Proton acceptor in the catalytic mechanism.

The protein belongs to the Maf family. YhdE subfamily. A divalent metal cation serves as cofactor.

Its subcellular location is the cytoplasm. It catalyses the reaction dTTP + H2O = dTMP + diphosphate + H(+). It carries out the reaction UTP + H2O = UMP + diphosphate + H(+). Functionally, nucleoside triphosphate pyrophosphatase that hydrolyzes dTTP and UTP. May have a dual role in cell division arrest and in preventing the incorporation of modified nucleotides into cellular nucleic acids. This is dTTP/UTP pyrophosphatase from Rhodopseudomonas palustris (strain HaA2).